The primary structure comprises 801 residues: MHHRMNEMNLSPVGMEQLTSSSVSNALPVSGSHLGLAASPTHSAIPAPGLPVAIPNLGPSLSSLPSALSLMLPMGIGDRGVMCGLPERNYTLPPPPYPHLESSYFRTILPGILSYLADRPPPQYIHPNSINVDGNTALSITNNASALDPYQSNGNVGLEPGIVSIDSRSVNTHGAQSLHPSDGHEVALDTAITMENVSRVTSPISTDGMAEELTMDGVAGEHSQIPNGSRSHEPLSVDSVSNNLAADAVGHGGVIPMHGNGLELPVVMETDHIASRVNGMSDSALSDSIHTVAMSTNSVSVALSTSHNLASLESVSLHEVGLSLEPVAVSSITQEVAMGTGHVDVSSDSLSFVPPSLQMEDSNSNKENMATLFTIWCTLCDRAYPSDCPEHGPVTFVPDTPIESRARLSLPKQLVLRQSIVGAEVGVWTGETIPVRTCFGPLIGQQSHSMEVAEWTDKAVNHIWKIYHNGVLEFCIITADENECNWMMFVRKARNREEQNLVAYPHDGKIFFCTSQDIPPENELLFYYSRDYAQQIGVPEHPDVHLCNCGKECNSYTEFKAHLTSHIHNHLPTQGHSGSHGPSHSKERKWKCSMCPQAFISPSKLHVHFMGHMGMKPHKCDFCSKAFSDPSNLRTHLKIHTGQKNYRCTLCDKSFTQKAHLESHMVIHTGEKNLKCDYCDKLFMRRQDLKQHVLIHTQERQIKCPKCDKLFLRTNHLKKHLNSHEGKRDYVCEKCTKAYLTKYHLTRHLKTCKGPTSSSSAPEEEEEDDSEEEDLADSVGTEDCRINSAVYSADESLSAHK.

The SET domain maps to 412 to 529; it reads KQLVLRQSIV…PENELLFYYS (118 aa). The C2H2-type 1; atypical zinc finger occupies 545 to 566; the sequence is HLCNCGKECNSYTEFKAHLTSH. C2H2-type zinc fingers lie at residues 618-640, 646-668, 674-696, and 702-724; these read HKCDFCSKAFSDPSNLRTHLKIH, YRCTLCDKSFTQKAHLESHMVIH, LKCDYCDKLFMRRQDLKQHVLIH, and IKCPKCDKLFLRTNHLKKHLNSH. The C2H2-type 6; atypical zinc-finger motif lies at 730–752; the sequence is YVCEKCTKAYLTKYHLTRHLKTC. Positions 751–782 are disordered; that stretch reads TCKGPTSSSSAPEEEEEDDSEEEDLADSVGTE. Residues 762 to 776 are compositionally biased toward acidic residues; it reads PEEEEEDDSEEEDLA.

This sequence belongs to the class V-like SAM-binding methyltransferase superfamily.

The protein localises to the nucleus. Functionally, may function as a transcription factor involved in cell differentiation. This chain is PR domain zinc finger protein 4 (PRDM4), found in Pongo abelii (Sumatran orangutan).